Consider the following 288-residue polypeptide: Ankyrin repeat and SOCS box protein 8 (288 aa).

Position 17 is a phosphoserine (S17). 4 ANK repeats span residues 52 to 81 (GTLKPLHCACMVSDADCVELLLEKGAEVNA), 85 to 113 (YNRTALHYAAEKDEACVEVLLEYGANPNA), 117 to 146 (NRDTPLHWAAFKNNAECVRALLESGASVNA), and 150 to 179 (NNDTPLSWAAMKGNLESVSILLDYGAEVRV). The region spanning 235–288 (QLCEKLTVLCSAPGTLKTLARYAVRRSLGLQYLPDAVKGLPLPASLKEYLLLLE) is the SOCS box domain.

It belongs to the ankyrin SOCS box (ASB) family. As to quaternary structure, interacts with TBK1; this interaction promotes TBK1 proteasomal degradation. Phosphorylated by TBK1. Highest level of expression in skeletal muscle. Also expressed in heart, brain, placenta, liver, kidney and pancreas.

The protein resides in the cytoplasm. The protein operates within protein modification; protein ubiquitination. In terms of biological role, may be a substrate-recognition component of a SCF-like ECS (Elongin-Cullin-SOCS-box protein) E3 ubiquitin-protein ligase complex which mediates the ubiquitination and subsequent proteasomal degradation of target proteins. Inhibits IFN-beta production through the IRF3 signaling pathway by targeting TBK1 via 'Lys-48'-linked ubiquitination, leading to its proteasomal degradation. The polypeptide is Ankyrin repeat and SOCS box protein 8 (ASB8) (Homo sapiens (Human)).